A 428-amino-acid chain; its full sequence is Acetyltransferase sirH (428 aa).

N8 carries an N-linked (GlcNAc...) asparagine glycan. Helical transmembrane passes span 33–53 (LLTPIFMAVAVLTTLPPPGPL), 55–75 (VIVGLTAFTSLWLHVLTHWVS), 78–98 (AFFMDAIFMISITVRWLLMFV), 305–325 (LYVGFLVSGVQHYACALLIPS), 329–349 (GWGMFWQMPAYAAVVTVEDIL), and 366–386 (FLGYIWTAYWMTLIYALPVGF).

This sequence belongs to the wax synthase family.

The protein resides in the membrane. It functions in the pathway polyketide biosynthesis. Its function is as follows. Acetyltransferase; part of the gene cluster that mediates the biosynthesis of asperlin, a polyketide showing anti-inflammatory, antitumor and antibiotic activities. The first step of the asperlin biosynthesis is the production of the intermediate 2,4,6-octatrienoic acid by the highly redusing polyketide synthase alnA with cleavage of the PKS product by the esterase alnB. 2,4,6-octatrienoic acid is further converted to asperlin via several steps involving the remaining enzymes from the cluster. This chain is Acetyltransferase sirH, found in Emericella nidulans (strain FGSC A4 / ATCC 38163 / CBS 112.46 / NRRL 194 / M139) (Aspergillus nidulans).